A 549-amino-acid polypeptide reads, in one-letter code: MARTPGPAPLCPGGGKAQLSSAFPPAAGLLLPAPTPPPLLLLLIPLLLFSRLCGALAGSIIVEPHVTAVWGKNVSLKCLIEVNETITQISWEKIHGKSTQTVAVHHPQYGFSVQGDYQGRVLFKNYSLNDATITLHNIGFSDSGKYICKAVTFPLGNAQSSTTVTVLVEPTVSLIKGPDSLIDGGNETVAAVCVAATGKPVAQIDWEGDLGEMESSTTSFPNETATIVSQYKLFPTRFARGRRITCVVKHPALEKDIRYSFILDIQYAPEVSVTGYDGNWFVGRKGVNLKCNADANPPPFKSVWSRLDGQWPDGLLASDNTLHFVHPLTVNYSGVYVCKVSNSLGQRSDQKVIYISDPPTTTTLQPTVQWHSSPADVQDIATEHKKLPFPLSTLATLKDDTIGTIIASVVGGALFLVLVSILAGVFCYRRRRTFRGDYFAKNYIPPSDMQKESQIDVLHQDELDSYPDSVKKENKNPVNNLIRKDYLEEPEKTQWNNVENLTRFERPMDYYEDLKMGMKFVSDERYNESEDGLVSHVDGSVISRREWYV.

The signal sequence occupies residues 1–57 (MARTPGPAPLCPGGGKAQLSSAFPPAAGLLLPAPTPPPLLLLLIPLLLFSRLCGALA). An Ig-like V-type domain is found at 58–165 (GSIIVEPHVT…GNAQSSTTVT (108 aa)). The Extracellular portion of the chain corresponds to 58 to 404 (GSIIVEPHVT…ATLKDDTIGT (347 aa)). Residues Asn-73, Asn-83, Asn-125, Asn-186, Asn-222, and Asn-331 are each glycosylated (N-linked (GlcNAc...) asparagine). A disulfide bridge connects residues Cys-78 and Cys-148. Ig-like C2-type domains follow at residues 170–258 (PTVS…KDIR) and 269–354 (PEVS…KVIY). Intrachain disulfides connect Cys-193/Cys-246 and Cys-291/Cys-338. A helical membrane pass occupies residues 405 to 425 (IIASVVGGALFLVLVSILAGV). Over 426-549 (FCYRRRRTFR…SVISRREWYV (124 aa)) the chain is Cytoplasmic.

Belongs to the nectin family. As to quaternary structure, cis- and trans-homodimer. Can form trans-heterodimers with NECTIN1, NECTIN2, PVR, IGSF4B/Necl-1 and with IGSF4. Interaction between NECTIN1 and NECTIN3 on the pre- and postsynaptic sites, respectively, initiates the formation of puncta adherentia junctions between axons and dendrites. Interacts (via Cytoplasmic domain) with AFDN, providing a connection with the actin cytoskeleton. Binds with low affinity to TIGIT. In terms of tissue distribution, ubiquitous with high expression in testes. Localized in spermatids at Sertoli-spermatid junctions. Expressed in ovarian granulosa cells, but only faintly expressed after ovulation.

The protein localises to the cell membrane. Its subcellular location is the postsynaptic cell membrane. The protein resides in the cell junction. It is found in the adherens junction. Functionally, cell adhesion molecule that promotes cell-cell adhesion through heterophilic trans-interactions with nectins-like or other nectins, such as trans-interaction with NECTIN2 at Sertoli-spermatid junctions. Trans-interaction with PVR induces activation of CDC42 and RAC small G proteins through common signaling molecules such as SRC and RAP1. Induces endocytosis-mediated down-regulation of PVR from the cell surface, resulting in reduction of cell movement and proliferation. Involved in axon guidance by promoting contacts between the commissural axons and the floor plate cells. Also involved in the formation of cell-cell junctions, including adherens junctions and synapses. Promotes formation of checkerboard-like cellular pattern of hair cells and supporting cells in the auditory epithelium via heterophilic interaction with NECTIN1: NECTIN1 is present in the membrane of hair cells and associates with NECTIN3 on supporting cells, thereby mediating heterotypic adhesion between these two cell types. Plays a role in the morphology of the ciliary body. The protein is Nectin-3 of Mus musculus (Mouse).